The sequence spans 338 residues: RNA 3'-terminal phosphate cyclase (338 aa).

ATP contacts are provided by residues Gln103 and 283–287 (YLADQ). Residue His308 is the Tele-AMP-histidine intermediate of the active site.

The protein belongs to the RNA 3'-terminal cyclase family. Type 1 subfamily.

Its subcellular location is the cytoplasm. It carries out the reaction a 3'-end 3'-phospho-ribonucleotide-RNA + ATP = a 3'-end 2',3'-cyclophospho-ribonucleotide-RNA + AMP + diphosphate. In terms of biological role, catalyzes the conversion of 3'-phosphate to a 2',3'-cyclic phosphodiester at the end of RNA. The mechanism of action of the enzyme occurs in 3 steps: (A) adenylation of the enzyme by ATP; (B) transfer of adenylate to an RNA-N3'P to produce RNA-N3'PP5'A; (C) and attack of the adjacent 2'-hydroxyl on the 3'-phosphorus in the diester linkage to produce the cyclic end product. The biological role of this enzyme is unknown but it is likely to function in some aspects of cellular RNA processing. This chain is RNA 3'-terminal phosphate cyclase, found in Shigella boydii serotype 18 (strain CDC 3083-94 / BS512).